The primary structure comprises 199 residues: OPA3-like protein (199 aa).

Positions 98-141 (RSSEKDKKKEEALQNRFKNLEEKLEVQQETINNLTNVIEAIQSS) form a coiled coil.

It belongs to the OPA3 family.

This is OPA3-like protein from Dictyostelium discoideum (Social amoeba).